Consider the following 722-residue polypeptide: Polyribonucleotide nucleotidyltransferase (722 aa).

Positions 486 and 492 each coordinate Mg(2+). In terms of domain architecture, KH spans 553–612 (PKIVQLQIDIDKISLVIGSTGKTVKAITDEFEVKVQIEQNGKIILFGDDDFKMQKAKERI). Residues 622-717 (GEIYEGTVKK…KFGKIDLEIV (96 aa)) enclose the S1 motif domain.

The protein belongs to the polyribonucleotide nucleotidyltransferase family. Mg(2+) is required as a cofactor.

It localises to the cytoplasm. It carries out the reaction RNA(n+1) + phosphate = RNA(n) + a ribonucleoside 5'-diphosphate. Involved in mRNA degradation. Catalyzes the phosphorolysis of single-stranded polyribonucleotides processively in the 3'- to 5'-direction. This chain is Polyribonucleotide nucleotidyltransferase, found in Borreliella burgdorferi (strain ZS7) (Borrelia burgdorferi).